The primary structure comprises 897 residues: Protein translocase subunit SecA (897 aa).

ATP contacts are provided by residues Q87, 105 to 109, and D512; that span reads GEGKT. Positions 846–897 are disordered; the sequence is EEEQQKQARKKMVFNLVDEDETSEPSKSKKLAGRNEPCPCGSGKKYKKCCGK. Positions 883, 885, 894, and 895 each coordinate Zn(2+).

This sequence belongs to the SecA family. Monomer and homodimer. Part of the essential Sec protein translocation apparatus which comprises SecA, SecYEG and auxiliary proteins SecDF-YajC and YidC. The cofactor is Zn(2+).

Its subcellular location is the cell inner membrane. It is found in the cytoplasm. The catalysed reaction is ATP + H2O + cellular proteinSide 1 = ADP + phosphate + cellular proteinSide 2.. In terms of biological role, part of the Sec protein translocase complex. Interacts with the SecYEG preprotein conducting channel. Has a central role in coupling the hydrolysis of ATP to the transfer of proteins into and across the cell membrane, serving as an ATP-driven molecular motor driving the stepwise translocation of polypeptide chains across the membrane. This chain is Protein translocase subunit SecA, found in Geobacter sulfurreducens (strain ATCC 51573 / DSM 12127 / PCA).